We begin with the raw amino-acid sequence, 361 residues long: Peptide chain release factor 1 (361 aa).

Gln236 is modified (N5-methylglutamine). The tract at residues 286 to 306 is disordered; sequence AADSQRAEARKGQVGSGDRSE.

It belongs to the prokaryotic/mitochondrial release factor family. In terms of processing, methylated by PrmC. Methylation increases the termination efficiency of RF1.

The protein resides in the cytoplasm. Peptide chain release factor 1 directs the termination of translation in response to the peptide chain termination codons UAG and UAA. This Magnetococcus marinus (strain ATCC BAA-1437 / JCM 17883 / MC-1) protein is Peptide chain release factor 1.